Here is a 143-residue protein sequence, read N- to C-terminus: Peptide methionine sulfoxide reductase MsrB (143 aa).

One can recognise a MsrB domain in the interval 16 to 139 (DAELRRRLTP…NSAALNFEAK (124 aa)). Residues C55, C58, C104, and C107 each contribute to the Zn(2+) site. The Nucleophile role is filled by C128.

This sequence belongs to the MsrB Met sulfoxide reductase family. Requires Zn(2+) as cofactor.

It catalyses the reaction L-methionyl-[protein] + [thioredoxin]-disulfide + H2O = L-methionyl-(R)-S-oxide-[protein] + [thioredoxin]-dithiol. In Burkholderia mallei (strain NCTC 10229), this protein is Peptide methionine sulfoxide reductase MsrB.